The chain runs to 427 residues: Lactadherin (427 aa).

A signal peptide spans 1–22; sequence MQFSRVLAALCGVLLCASGLFA. EGF-like domains lie at 24–61 and 64–108; these read SGDFCDSSLCLNGGTCLMGQDNDIYCLCPEGFTGLVCN and EKGP…IHCE. Disulfide bonds link C28–C39, C33–C49, and C51–C60. A glycan (N-linked (GlcNAc...) asparagine) is linked at N61. Intrachain disulfides connect C68–C79, C73–C96, C98–C107, C111–C267, C254–C258, and C272–C427. The Cell attachment site motif lies at 87-89; the sequence is RGD. F5/8 type C domains lie at 111–267 and 272–427; these read CSTK…LLGC and CSEP…LLGC. Residue N230 is glycosylated (N-linked (GlcNAc...) asparagine). N-linked (GlcNAc...) asparagine glycosylation is found at N280 and N390.

As to expression, spleen, lung, heart, brain and muscle.

Its subcellular location is the membrane. The protein resides in the secreted. It localises to the cytoplasmic vesicle. It is found in the secretory vesicle. The protein localises to the acrosome membrane. Functionally, contributes to phagocytic removal of apoptotic cells in many tissues. Plays an important role in the maintenance of intestinal epithelial homeostasis and the promotion of mucosal healing. Promotes VEGF-dependent neovascularization. Specific ligand for the alpha-v/beta-3 and alpha-v/beta-5 receptors. Also binds to phosphatidylserine-enriched cell surfaces in a receptor-independent manner. Zona pellucida-binding protein which may play a role in gamete interaction. Appears to participate in the O-acetylation of GD3 ganglioside sialic acid. This is Lactadherin (Mfge8) from Rattus norvegicus (Rat).